A 226-amino-acid polypeptide reads, in one-letter code: LysM and putative peptidoglycan-binding domain-containing protein 1 (226 aa).

Phosphoserine occurs at positions 23 and 33. Positions 40–84 (LEHQLEPGDTLAGLALKYGVTMEQIKRTNRLYTNDSIFLKKTLYI) constitute a LysM domain. Residues 95–156 (NGLDSEEEND…PSHDLSASDF (62 aa)) form a disordered region. Residues 98–107 (DSEEENDGEE) are compositionally biased toward acidic residues. A Phosphoserine modification is found at serine 99. Positions 142–151 (QETSTPSHDL) are enriched in polar residues. A phosphoserine mark is found at serine 165, serine 180, serine 193, and serine 211. The interval 170-226 (AAAQKLRKGESGVPEEDTGLYPSSPRMQQRAVLGPVPLTRTSRTQTLRDQEDEIFKL) is disordered. Positions 215-226 (TLRDQEDEIFKL) are enriched in basic and acidic residues.

The chain is LysM and putative peptidoglycan-binding domain-containing protein 1 (Lysmd1) from Mus musculus (Mouse).